The sequence spans 731 residues: 1,4-alpha-glucan branching enzyme GlgB (731 aa).

The Nucleophile role is filled by Asp412. Residue Glu465 is the Proton donor of the active site.

It belongs to the glycosyl hydrolase 13 family. GlgB subfamily. Monomer.

It carries out the reaction Transfers a segment of a (1-&gt;4)-alpha-D-glucan chain to a primary hydroxy group in a similar glucan chain.. The protein operates within glycan biosynthesis; glycogen biosynthesis. Functionally, catalyzes the formation of the alpha-1,6-glucosidic linkages in glycogen by scission of a 1,4-alpha-linked oligosaccharide from growing alpha-1,4-glucan chains and the subsequent attachment of the oligosaccharide to the alpha-1,6 position. The chain is 1,4-alpha-glucan branching enzyme GlgB from Bordetella pertussis (strain Tohama I / ATCC BAA-589 / NCTC 13251).